The sequence spans 326 residues: D-amino-acid oxidase (326 aa).

The FAD site is built by Gly-18, Val-19, Thr-46, Thr-47, Ser-48, Ala-52, Ala-53, Val-162, and Ser-179. D-proline contacts are provided by Tyr-222 and Arg-277. The D-serine site is built by Tyr-222 and Arg-277. FAD-binding residues include Arg-277, Gly-303, Gly-304, Gly-306, and Thr-308. Gly-304 contributes to the D-proline binding site. Gly-304 is a binding site for D-serine.

Belongs to the DAMOX/DASOX family. In terms of assembly, monomer. The cofactor is FAD.

It localises to the cytoplasm. The protein localises to the secreted. The protein resides in the cell wall. It carries out the reaction a D-alpha-amino acid + O2 + H2O = a 2-oxocarboxylate + H2O2 + NH4(+). It catalyses the reaction D-valine + O2 + H2O = 3-methyl-2-oxobutanoate + H2O2 + NH4(+). The catalysed reaction is D-leucine + O2 + H2O = 4-methyl-2-oxopentanoate + H2O2 + NH4(+). The enzyme catalyses D-isoleucine + O2 + H2O = (R)-3-methyl-2-oxopentanoate + H2O2 + NH4(+). It carries out the reaction D-tyrosine + O2 + H2O = 3-(4-hydroxyphenyl)pyruvate + H2O2 + NH4(+). It catalyses the reaction D-threonine + O2 + H2O = (S)-3-hydroxy-2-oxobutanoate + H2O2 + NH4(+). Its activity is regulated as follows. Inhibited by benzoate and phenylmethylsulfonyl fluoride (PMSF). Weakly inhibited by anthranilate, crotonate, and the amino acid-modifying agents dithionitrobenzoic acid and diethyl pyrocarbonate. Not inhibited by malonate, meso-tartrate, D-malate, or the amino acid-modifying agents iodoacetic acid or butane-2,3-dione. In terms of biological role, catalyzes the oxidative deamination of D-amino acids with broad substrate specificity. This is D-amino-acid oxidase from Rubrobacter xylanophilus (strain DSM 9941 / JCM 11954 / NBRC 16129 / PRD-1).